The sequence spans 142 residues: Organic hydroperoxide resistance protein-like 2 (142 aa).

It belongs to the OsmC/Ohr family.

This chain is Organic hydroperoxide resistance protein-like 2, found in Staphylococcus epidermidis (strain ATCC 35984 / DSM 28319 / BCRC 17069 / CCUG 31568 / BM 3577 / RP62A).